The primary structure comprises 541 residues: Sorting nexin-27 (541 aa).

The segment at 1 to 42 (MADEDGEGIHPSAPHRNGGGGGGGGSGLHCAGNGGGGGGGPR) is disordered. Over residues 17 to 41 (NGGGGGGGGSGLHCAGNGGGGGGGP) the composition is skewed to gly residues. The PDZ domain maps to 43-136 (VVRIVKSESG…ELILTVLSVP (94 aa)). Phosphoserine occurs at positions 51 and 62. The PX domain occupies 161–269 (QAVPISVPRY…EFLSESDENY (109 aa)). Residues 273-362 (SDVELRVALP…TCLTIRKWLF (90 aa)) enclose the Ras-associating domain. The FERM-like region F1 stretch occupies residues 273-362 (SDVELRVALP…TCLTIRKWLF (90 aa)). Residues 373 to 421 (NDLAVTYFFHQAVDDVKKGYIKAEEKSYQLQKLYEQRKMVMYLNMLRTC) form an FERM-like region F2 region. Residues 425 to 525 (NEIIFPHCAC…RVFCELKWRK (101 aa)) are FERM-like region F3.

The protein belongs to the sorting nexin family. In terms of assembly, core component of the SNX27-retromer, a multiprotein complex composed of SNX27, the WASH complex and the retromer complex. Interacts (via PDZ domain) with a number of target transmembrane proteins (via PDZ-binding motif): ABCC4, ADRB2, ARHGEF7, GRIA1, GRIA2, GRIN1, GRIN2A GRIN2C, KCNJ6, KCNJ9 and SLC2A1/GLUT1. Interacts (via the FERM-like regions) with the WASH complex. Interacts with SNX1. Interacts with CYTIP. Isoform 1 and isoform 2 directly interact with DGKZ. Isoform 1 and isoform 2 interact with HT4R isoform 5-HTA(A). Interacts with MCC. Interacts (via PDZ domains) with SLC9A3; directs SLC9A3 membrane insertion from early endosomes to the plasma membrane. Widely expressed. Expressed in cells of hematopoietic origin (at protein level).

The protein resides in the early endosome membrane. It is found in the cytoplasm. The protein localises to the cytosol. Involved in the retrograde transport from endosome to plasma membrane, a trafficking pathway that promotes the recycling of internalized transmembrane proteins. Following internalization, endocytosed transmembrane proteins are delivered to early endosomes and recycled to the plasma membrane instead of being degraded in lysosomes. SNX27 specifically binds and directs sorting of a subset of transmembrane proteins containing a PDZ-binding motif at the C-terminus: following interaction with target transmembrane proteins, associates with the retromer complex, preventing entry into the lysosomal pathway, and promotes retromer-tubule based plasma membrane recycling. SNX27 also binds with the WASH complex. Interacts with membranes containing phosphatidylinositol-3-phosphate (PtdIns(3P)). May participate in establishment of natural killer cell polarity. Recruits CYTIP to early endosomes. This is Sorting nexin-27 (SNX27) from Homo sapiens (Human).